We begin with the raw amino-acid sequence, 422 residues long: Adenylosuccinate synthetase (422 aa).

GTP is bound by residues 11–17 (GDEGKGK) and 39–41 (GHT). Residue aspartate 12 is the Proton acceptor of the active site. The Mg(2+) site is built by aspartate 12 and glycine 39. Residues 12-15 (DEGK), 37-40 (NAGH), threonine 129, arginine 143, asparagine 219, threonine 234, and arginine 298 contribute to the IMP site. The active-site Proton donor is the histidine 40. 294 to 300 (VTTGRRR) provides a ligand contact to substrate. Residues arginine 300, 326 to 328 (KLD), and 409 to 411 (GTG) contribute to the GTP site.

It belongs to the adenylosuccinate synthetase family. In terms of assembly, homodimer. Mg(2+) is required as a cofactor.

Its subcellular location is the cytoplasm. The catalysed reaction is IMP + L-aspartate + GTP = N(6)-(1,2-dicarboxyethyl)-AMP + GDP + phosphate + 2 H(+). The protein operates within purine metabolism; AMP biosynthesis via de novo pathway; AMP from IMP: step 1/2. Plays an important role in the de novo pathway and in the salvage pathway of purine nucleotide biosynthesis. Catalyzes the first committed step in the biosynthesis of AMP from IMP. The chain is Adenylosuccinate synthetase from Blastomyces gilchristii (strain SLH14081) (Blastomyces dermatitidis).